The primary structure comprises 150 residues: Linear element protein rec25 (150 aa).

Ser11 is modified (phosphoserine).

Component of linear elements (LinEs), which are similar to synaptonemal complexes, at least composed of rec27, rec25, rec10 and mug20. Interacts with rec10; the interaction is direct.

It localises to the cytoplasm. It is found in the nucleus. Its subcellular location is the chromosome. During meiotic DNA recombination, binds to and may help activate DNA double-strand break (DSB) hotspot sites. The protein is Linear element protein rec25 of Schizosaccharomyces pombe (strain 972 / ATCC 24843) (Fission yeast).